The following is a 137-amino-acid chain: Large-conductance mechanosensitive channel (137 aa).

The next 2 helical transmembrane spans lie at 9–29 (AFAV…GAAF) and 79–99 (IQTI…VKAI).

It belongs to the MscL family. Homopentamer.

The protein resides in the cell inner membrane. In terms of biological role, channel that opens in response to stretch forces in the membrane lipid bilayer. May participate in the regulation of osmotic pressure changes within the cell. This is Large-conductance mechanosensitive channel from Pseudomonas paraeruginosa (strain DSM 24068 / PA7) (Pseudomonas aeruginosa (strain PA7)).